Reading from the N-terminus, the 403-residue chain is Argininosuccinate synthase (403 aa).

Position 9–17 (9–17) interacts with ATP; sequence AYSGGLDTS. Tyr-86 contributes to the L-citrulline binding site. ATP is bound at residue Gly-116. Residues Thr-118, Asn-122, and Asp-123 each contribute to the L-aspartate site. Residue Asn-122 participates in L-citrulline binding. L-citrulline-binding residues include Arg-126, Ser-174, Glu-259, and Tyr-271.

Belongs to the argininosuccinate synthase family. Type 1 subfamily. As to quaternary structure, homotetramer.

Its subcellular location is the cytoplasm. The enzyme catalyses L-citrulline + L-aspartate + ATP = 2-(N(omega)-L-arginino)succinate + AMP + diphosphate + H(+). It functions in the pathway amino-acid biosynthesis; L-arginine biosynthesis; L-arginine from L-ornithine and carbamoyl phosphate: step 2/3. This Ligilactobacillus salivarius (strain UCC118) (Lactobacillus salivarius) protein is Argininosuccinate synthase.